Here is a 493-residue protein sequence, read N- to C-terminus: Glutamate--tRNA ligase (493 aa).

Positions 10–20 match the 'HIGH' region motif; sequence PSPTGDPHVGT. Positions 251-255 match the 'KMSKS' region motif; sequence KLSKR. Lysine 254 is an ATP binding site.

It belongs to the class-I aminoacyl-tRNA synthetase family. Glutamate--tRNA ligase type 1 subfamily. In terms of assembly, monomer.

The protein localises to the cytoplasm. It catalyses the reaction tRNA(Glu) + L-glutamate + ATP = L-glutamyl-tRNA(Glu) + AMP + diphosphate. Functionally, catalyzes the attachment of glutamate to tRNA(Glu) in a two-step reaction: glutamate is first activated by ATP to form Glu-AMP and then transferred to the acceptor end of tRNA(Glu). In Pseudomonas fluorescens (strain Pf0-1), this protein is Glutamate--tRNA ligase.